A 428-amino-acid chain; its full sequence is MSVKWEKLEGNEGVLTVEVDAEKVNKGLDAAFKKVVKNITLPGFRKGKVPRVLFEKRFGVEALYQDALDILLPEAYAKAVEEAGIEPVSMPEIDIEQMEKGKSLIFKAKVTVKPEVKLGQYKGLEVEKMDTTVTDEDVENELKRLQEDYAELVVKEDGTVENGDTVVIDFEGFVDGEPFEGGKAENYSLEIGSGTFIPGFEEQLVGMKAGEEKEIQVTFPDEYHAKQLAGKPATFKVKVHEVKAKQLPALDDEFAKDVDEEVETLDELKAKIRARLEEAKKNEAETALRNAVVEKAAANAEMDIPEVMIKNETDRMLREFDQRLQMQGLNLQLYYQFSGQDEASLREQMKEDAEKRVRAALTLEAIAKAENIEVTDEEVNKELEKMAEAYKLSVDKLKELLGSLDGVKEDLKWRKTVDFLVEHSKVAA.

The PPIase FKBP-type domain maps to 163-248; that stretch reads GDTVVIDFEG…VHEVKAKQLP (86 aa).

Belongs to the FKBP-type PPIase family. Tig subfamily.

The protein resides in the cytoplasm. The catalysed reaction is [protein]-peptidylproline (omega=180) = [protein]-peptidylproline (omega=0). Its function is as follows. Involved in protein export. Acts as a chaperone by maintaining the newly synthesized protein in an open conformation. Functions as a peptidyl-prolyl cis-trans isomerase. This is Trigger factor from Geobacillus kaustophilus (strain HTA426).